The following is a 203-amino-acid chain: Large ribosomal subunit protein uL3 (203 aa).

This sequence belongs to the universal ribosomal protein uL3 family. As to quaternary structure, part of the 50S ribosomal subunit. Forms a cluster with proteins L14 and L19.

Its function is as follows. One of the primary rRNA binding proteins, it binds directly near the 3'-end of the 23S rRNA, where it nucleates assembly of the 50S subunit. The polypeptide is Large ribosomal subunit protein uL3 (Christiangramia forsetii (strain DSM 17595 / CGMCC 1.15422 / KT0803) (Gramella forsetii)).